The following is a 375-amino-acid chain: Chaperone protein DnaJ (375 aa).

Positions 5-70 (DYYEVLGVER…GKRSAYDQYG (66 aa)) constitute a J domain. A CR-type zinc finger spans residues 134 to 212 (GTTVTIRVPT…CHGQGRVEES (79 aa)). Cysteine 147, cysteine 150, cysteine 164, cysteine 167, cysteine 186, cysteine 189, cysteine 200, and cysteine 203 together coordinate Zn(2+). CXXCXGXG motif repeat units follow at residues 147–154 (CKTCDGTG), 164–171 (CTTCGGIG), 186–193 (CPRCHGSG), and 200–207 (CGSCHGQG).

It belongs to the DnaJ family. In terms of assembly, homodimer. Zn(2+) is required as a cofactor.

It localises to the cytoplasm. Functionally, participates actively in the response to hyperosmotic and heat shock by preventing the aggregation of stress-denatured proteins and by disaggregating proteins, also in an autonomous, DnaK-independent fashion. Unfolded proteins bind initially to DnaJ; upon interaction with the DnaJ-bound protein, DnaK hydrolyzes its bound ATP, resulting in the formation of a stable complex. GrpE releases ADP from DnaK; ATP binding to DnaK triggers the release of the substrate protein, thus completing the reaction cycle. Several rounds of ATP-dependent interactions between DnaJ, DnaK and GrpE are required for fully efficient folding. Also involved, together with DnaK and GrpE, in the DNA replication of plasmids through activation of initiation proteins. This Ectopseudomonas mendocina (strain ymp) (Pseudomonas mendocina) protein is Chaperone protein DnaJ.